Here is a 68-residue protein sequence, read N- to C-terminus: Toxin Cg2 (68 aa).

Residues 1-66 enclose the LCN-type CS-alpha/beta domain; that stretch reads KDGYLVNKST…VYPIPGKTCS (66 aa). Cystine bridges form between cysteine 12–cysteine 65, cysteine 16–cysteine 41, cysteine 25–cysteine 46, and cysteine 29–cysteine 48.

This sequence belongs to the long (4 C-C) scorpion toxin superfamily. Sodium channel inhibitor family. In terms of tissue distribution, expressed by the venom gland.

The protein localises to the secreted. Binds to sodium channels (Nav) and inhibits them. This chain is Toxin Cg2, found in Centruroides gracilis (Slenderbrown scorpion).